Here is a 166-residue protein sequence, read N- to C-terminus: Interferon gamma (166 aa).

The N-terminal stretch at 1–23 (MKYTSYILAFQLCIILGSSSCYS) is a signal peptide. Glutamine 24 is modified (pyrrolidone carboxylic acid). 3 N-linked (GlcNAc...) asparagine glycosylation sites follow: asparagine 39, asparagine 44, and asparagine 106.

This sequence belongs to the type II (or gamma) interferon family. Homodimer. In terms of tissue distribution, released primarily from activated T lymphocytes.

It localises to the secreted. Functionally, produced by lymphocytes activated by specific antigens or mitogens. IFN-gamma, in addition to having antiviral activity, has important immunoregulatory functions. It is a potent activator of macrophages, it has antiproliferative effects on transformed cells and it can potentiate the antiviral and antitumor effects of the type I interferons. The polypeptide is Interferon gamma (IFNG) (Marmota monax (Woodchuck)).